Here is an 827-residue protein sequence, read N- to C-terminus: Periplasmic nitrate reductase (827 aa).

The segment at residues 1-32 is a signal peptide (tat-type signal); it reads MELNRRDFMKANAAMAAAAAAGMTIPVKNVYA. The 57-residue stretch at 37–93 folds into the 4Fe-4S Mo/W bis-MGD-type domain; that stretch reads IRWDKAPCRFCGTGCSVLVGTKDGRVVATQGDPDAEVNRGLNCIKGYFLSKIMYGAD. [4Fe-4S] cluster is bound by residues cysteine 44, cysteine 47, cysteine 51, and cysteine 79. Residues lysine 81, glutamine 148, asparagine 173, cysteine 177, 210–217, 241–245, methionine 371, glutamine 375, asparagine 481, 507–508, lysine 530, aspartate 557, and 717–726 contribute to the Mo-bis(molybdopterin guanine dinucleotide) site; these read WGSNMAEM, STFEH, SD, and TGRVLEHWHT. Phenylalanine 793 is a binding site for substrate. Residues asparagine 801 and lysine 818 each contribute to the Mo-bis(molybdopterin guanine dinucleotide) site.

The protein belongs to the prokaryotic molybdopterin-containing oxidoreductase family. NasA/NapA/NarB subfamily. As to quaternary structure, component of the periplasmic nitrate reductase NapAB complex composed of NapA and NapB. [4Fe-4S] cluster serves as cofactor. Requires Mo-bis(molybdopterin guanine dinucleotide) as cofactor. Post-translationally, predicted to be exported by the Tat system. The position of the signal peptide cleavage has not been experimentally proven.

It localises to the periplasm. The enzyme catalyses 2 Fe(II)-[cytochrome] + nitrate + 2 H(+) = 2 Fe(III)-[cytochrome] + nitrite + H2O. Catalytic subunit of the periplasmic nitrate reductase complex NapAB. Receives electrons from NapB and catalyzes the reduction of nitrate to nitrite. The sequence is that of Periplasmic nitrate reductase from Actinobacillus pleuropneumoniae serotype 7 (strain AP76).